Consider the following 202-residue polypeptide: High mobility group protein B3 (202 aa).

2 consecutive DNA-binding regions (HMG box) follow at residues 9–79 (PKGK…KDYG) and 93–161 (PKRP…ADYK). Cysteine sulfonic acid (-SO3H); alternate is present on residues cysteine 23 and cysteine 45. Cysteine 23 and cysteine 45 are disulfide-bonded. A disordered region spans residues 71-98 (YDREMKDYGPAKGGKKKKDPNAPKRPPS). A Cysteine sulfonic acid (-SO3H) modification is found at cysteine 104. A disordered region spans residues 161 to 202 (KSKGKFDGAKGAATKAARKKVEEEDEEEEEDEEEEDEDDDDE). The span at 183–202 (EEDEEEEEDEEEEDEDDDDE) shows a compositional bias: acidic residues.

It belongs to the HMGB family. Reduction/oxidation of cysteine residues Cys-23, Cys-45 and Cys-104 and a possible intramolecular disulfide bond involving Cys-23 and Cys-45 give rise to different redox forms with specific functional activities in various cellular compartments: 1- fully reduced HMGB3 (HMGB3C23hC45hC104h), 2- disulfide HMGB3 (HMGB3C23-C45C104h) and 3- sulfonyl HMGB3 (HMGB3C23soC45soC104so).

It is found in the nucleus. Its subcellular location is the chromosome. It localises to the cytoplasm. Functionally, multifunctional protein with various roles in different cellular compartments. May act in a redox sensitive manner. Associates with chromatin and binds DNA with a preference for non-canonical DNA structures such as single-stranded DNA. Can bend DNA and enhance DNA flexibility by looping thus providing a mechanism to promote activities on various gene promoters. Binds to the delta-1 crystallin/ASL1 enhancer. Proposed to be involved in the innate immune response to nucleic acids by acting as a cytoplasmic promiscuous immunogenic DNA/RNA sensor. The protein is High mobility group protein B3 (HMGB3) of Gallus gallus (Chicken).